We begin with the raw amino-acid sequence, 186 residues long: MINRNANRDRDRSRSNDKELKINYRIKAREVRVIFENGTQEVLSIEDAIKKAKEAGLDLVEVSPNVSPPVCKIIDYGKYKFHQEKRQKEQKKNQKVIKLKEVRMQPKIDTHDLDFKSKNILSFLKDGNKVKVTIRFRGRELAHTYLGYGILNSILEKVGDVNYVLESAAKMEGKTMFLIVAPKFKK.

The protein belongs to the IF-3 family. In terms of assembly, monomer.

Its subcellular location is the cytoplasm. IF-3 binds to the 30S ribosomal subunit and shifts the equilibrium between 70S ribosomes and their 50S and 30S subunits in favor of the free subunits, thus enhancing the availability of 30S subunits on which protein synthesis initiation begins. In Borreliella afzelii (strain PKo) (Borrelia afzelii), this protein is Translation initiation factor IF-3.